The following is a 476-amino-acid chain: Cysteine--tRNA ligase (476 aa).

Cys31 provides a ligand contact to Zn(2+). A 'HIGH' region motif is present at residues 33–43; that stretch reads PTVYNYAHIGN. The Zn(2+) site is built by Cys211, His236, and Glu240. The 'KMSKS' region motif lies at 269-273; sequence KMSKS. Lys272 is a binding site for ATP.

Belongs to the class-I aminoacyl-tRNA synthetase family. As to quaternary structure, monomer. The cofactor is Zn(2+).

It is found in the cytoplasm. The enzyme catalyses tRNA(Cys) + L-cysteine + ATP = L-cysteinyl-tRNA(Cys) + AMP + diphosphate. In Xanthomonas oryzae pv. oryzae (strain MAFF 311018), this protein is Cysteine--tRNA ligase.